Here is a 258-residue protein sequence, read N- to C-terminus: Glucanase inhibitor protein 1 (258 aa).

Residues Met1 to Gly19 form the signal peptide. The Peptidase S1 domain occupies Ile27–Lys254. Cys54 and Cys70 are oxidised to a cystine. N-linked (GlcNAc...) asparagine glycosylation is found at Asn87, Asn102, Asn107, Asn157, and Asn185. Intrachain disulfides connect Cys177/Cys189 and Cys199/Cys230.

It belongs to the peptidase S1 family. Forms an apoplastic complex with host endoglucanases in tomato leaves during P.infestans infection.

It is found in the secreted. Secreted effector that suppresses host plant glucan elicitor-mediated defense responses. Targets host endoglucanases and inhibits the endoglucanase-mediated release of elicitor-active glucan oligosaccharides from P.infestans cell walls. The chain is Glucanase inhibitor protein 1 from Phytophthora infestans (Potato late blight agent).